We begin with the raw amino-acid sequence, 216 residues long: Putative holocytochrome-c1 synthase (216 aa).

The disordered stretch occupies residues 1–46; it reads MQPEQLNQEEESKCPVPPEVRDAWLKSHGGKKPSEVHDTPHPTMLP.

The protein belongs to the cytochrome c-type heme lyase family.

The protein resides in the mitochondrion inner membrane. It carries out the reaction holo-[cytochrome c] = apo-[cytochrome c] + heme b. In terms of biological role, lyase that catalyzes the covalent linking of the heme group to the cytochrome C1 apoprotein to produce the mature functional cytochrome. This is Putative holocytochrome-c1 synthase from Schizosaccharomyces pombe (strain 972 / ATCC 24843) (Fission yeast).